The chain runs to 740 residues: ATP-dependent RNA helicase DDX1 (740 aa).

The interval 1 to 448 (MAAFSEMGVM…ETVHHVVVPV (448 aa)) is interaction with dsRNA. Residues 2 to 428 (AAFSEMGVMP…SEKIMHFPTW (427 aa)) enclose the Helicase ATP-binding domain. 46–53 (AETGSGKT) is an ATP binding site. The B30.2/SPRY domain occupies 70-247 (DQQEGKKGKA…LKFNFGEEDF (178 aa)). The short motif at 370-373 (DEAD) is the DEAD box element. One can recognise a Helicase C-terminal domain in the interval 493–681 (KGEYIVRAIK…QVEPDIKVPL (189 aa)).

The protein belongs to the DEAD box helicase family. DDX1 subfamily.

It is found in the nucleus. The protein localises to the cytoplasm. The protein resides in the cytoplasmic granule. Its subcellular location is the cytosol. It localises to the mitochondrion. The catalysed reaction is ATP + H2O = ADP + phosphate + H(+). Its function is as follows. Acts as an ATP-dependent RNA helicase, able to unwind both RNA-RNA and RNA-DNA duplexes. Possesses 5' single-stranded RNA overhang nuclease activity. Acts as a positive regulator of transcription. May be involved in 3'-end cleavage and polyadenylation of pre-mRNAs. Binds DNA and RNA. Component of the tRNA-splicing ligase complex required to facilitate the enzymatic turnover of catalytic subunit rtcb. Binds (via helicase ATP-binding domain) on both short and long poly(I:C) dsRNA. In Xenopus laevis (African clawed frog), this protein is ATP-dependent RNA helicase DDX1 (ddx1).